Here is a 536-residue protein sequence, read N- to C-terminus: Glucose-6-phosphate isomerase (536 aa).

Residue Glu345 is the Proton donor of the active site. Residues His376 and Lys505 contribute to the active site.

The protein belongs to the GPI family.

Its subcellular location is the cytoplasm. It catalyses the reaction alpha-D-glucose 6-phosphate = beta-D-fructose 6-phosphate. It participates in carbohydrate biosynthesis; gluconeogenesis. The protein operates within carbohydrate degradation; glycolysis; D-glyceraldehyde 3-phosphate and glycerone phosphate from D-glucose: step 2/4. Catalyzes the reversible isomerization of glucose-6-phosphate to fructose-6-phosphate. The sequence is that of Glucose-6-phosphate isomerase from Ruegeria sp. (strain TM1040) (Silicibacter sp.).